The following is a 445-amino-acid chain: Tubulin beta-3 chain (445 aa).

Residues Gln-11, Glu-69, Ser-138, Gly-142, Thr-143, Gly-144, Asn-204, and Asn-226 each coordinate GTP. Glu-69 is a Mg(2+) binding site. Positions 417-426 (DLVSEYQQYQ) are enriched in polar residues. Residues 417-445 (DLVSEYQQYQEASADDEADEFDEEEGDEE) are disordered. Positions 429–445 (SADDEADEFDEEEGDEE) are enriched in acidic residues.

Belongs to the tubulin family. As to quaternary structure, dimer of alpha and beta chains. A typical microtubule is a hollow water-filled tube with an outer diameter of 25 nm and an inner diameter of 15 nM. Alpha-beta heterodimers associate head-to-tail to form protofilaments running lengthwise along the microtubule wall with the beta-tubulin subunit facing the microtubule plus end conferring a structural polarity. Microtubules usually have 13 protofilaments but different protofilament numbers can be found in some organisms and specialized cells. The cofactor is Mg(2+).

It is found in the cytoplasm. The protein resides in the cytoskeleton. Its function is as follows. Tubulin is the major constituent of microtubules, a cylinder consisting of laterally associated linear protofilaments composed of alpha- and beta-tubulin heterodimers. Microtubules grow by the addition of GTP-tubulin dimers to the microtubule end, where a stabilizing cap forms. Below the cap, tubulin dimers are in GDP-bound state, owing to GTPase activity of alpha-tubulin. The sequence is that of Tubulin beta-3 chain (TUBB3) from Oomycete-like sp. (strain MacKay2000).